Consider the following 353-residue polypeptide: Outer membrane protein A (353 aa).

An N-terminal signal peptide occupies residues 1-21 (MKKTAIALAVALVGFATVAQA). 8 consecutive transmembrane segments (beta stranded) span residues 27–37 (TWYTGGKLGWS), 56–67 (QLGAGAFFGYQA), 71–79 (LGFEMGYDW), 97–108 (QGVQLAAKLSYP), 113–121 (LDVYTRLGG), 148–157 (PLVALGAEYA), 162–169 (WATRMEYQ), and 188–196 (LLSVGVSYR). 4 tandem repeats follow at residues 208 to 209 (AP), 210 to 211 (TP), 212 to 213 (AP), and 214 to 215 (AP). Positions 208-215 (APTPAPAP) are 4 X 2 AA approximate tandem repeats of A-P. The 129-residue stretch at 217-345 (VDTKRFTLKS…RVEIEVKGYK (129 aa)) folds into the OmpA-like domain. Cys318 and Cys330 are joined by a disulfide.

The protein belongs to the outer membrane OOP (TC 1.B.6) superfamily. OmpA family. Monomer and homodimer.

It is found in the cell outer membrane. In terms of biological role, with TolR probably plays a role in maintaining the position of the peptidoglycan cell wall in the periplasm. Acts as a porin with low permeability that allows slow penetration of small solutes; an internal gate slows down solute passage. This Yersinia pseudotuberculosis serotype I (strain IP32953) protein is Outer membrane protein A.